Reading from the N-terminus, the 200-residue chain is MQTSPLLENLIESLRCLPGVGPKSAQRMAYHLLQRDRSGGMNLARALTEAMSKIGHCEHCRTFTEEDICSICDNPRRQNSRLLCVVEMPADIQAIEQTGQFSGRYFVLMGHLSPLDGIGPREIGLDLLQRRLQQEQFNEVILATNPTVEGDATANYIAELCNQQNIKVSRIAHGIPVGGELETVDGTTLTHSFLGRRTIG.

The C4-type zinc finger occupies 57–72 (CEHCRTFTEEDICSIC). Residues 81–176 (RLLCVVEMPA…KVSRIAHGIP (96 aa)) enclose the Toprim domain.

Belongs to the RecR family.

Functionally, may play a role in DNA repair. It seems to be involved in an RecBC-independent recombinational process of DNA repair. It may act with RecF and RecO. The polypeptide is Recombination protein RecR (Mannheimia succiniciproducens (strain KCTC 0769BP / MBEL55E)).